The sequence spans 276 residues: WIMGHMVNKIEQINEFLDLGANSIEVDIAFDELGYPEYTYHGVPCDCKRYCTKSEKIDDFIEALSAATTPGNPKFRKELTLVVFDLKTGGFDASRMYKSGKAFAELIQFSYWKGSDDAGRAYIVLSLPKLDHYEFIKAFREHFDTSTFKNLLEERVGYDFSGNEDMGLTRVVLNKAGVNDREHVWQGDGITNCILRSLDRVKAAVAIRDSATGYINKVYFWTIQAYSSVRDALNAEVDGIMTNEPDVITNVLKEDAFKDRFRLATYWDNPWETFKR.

His5 is an active-site residue. Mg(2+)-binding residues include Glu25 and Asp27. His41 acts as the Nucleophile in catalysis. Disulfide bonds link Cys45–Cys51 and Cys47–Cys193. Residue Asp85 coordinates Mg(2+).

This sequence belongs to the arthropod phospholipase D family. Class II subfamily. The cofactor is Mg(2+). As to expression, expressed by the venom gland.

Its subcellular location is the secreted. The catalysed reaction is an N-(acyl)-sphingosylphosphocholine = an N-(acyl)-sphingosyl-1,3-cyclic phosphate + choline. It carries out the reaction an N-(acyl)-sphingosylphosphoethanolamine = an N-(acyl)-sphingosyl-1,3-cyclic phosphate + ethanolamine. It catalyses the reaction a 1-acyl-sn-glycero-3-phosphocholine = a 1-acyl-sn-glycero-2,3-cyclic phosphate + choline. The enzyme catalyses a 1-acyl-sn-glycero-3-phosphoethanolamine = a 1-acyl-sn-glycero-2,3-cyclic phosphate + ethanolamine. Functionally, dermonecrotic toxins cleave the phosphodiester linkage between the phosphate and headgroup of certain phospholipids (sphingolipid and lysolipid substrates), forming an alcohol (often choline) and a cyclic phosphate. This toxin acts on sphingomyelin (SM). It may also act on ceramide phosphoethanolamine (CPE), lysophosphatidylcholine (LPC) and lysophosphatidylethanolamine (LPE), but not on lysophosphatidylserine (LPS), and lysophosphatidylglycerol (LPG). It acts by transphosphatidylation, releasing exclusively cyclic phosphate products as second products. Induces dermonecrosis, hemolysis, increased vascular permeability, edema, inflammatory response, and platelet aggregation. In Loxosceles laeta (South American recluse spider), this protein is Dermonecrotic toxin LlSicTox-alphaIV2iv.